Consider the following 418-residue polypeptide: MGYQKIQVPATGDKITVNADMSLSVPKNPIIPFIEGDGIGVDISPVMIKVVDAAVEKAYKGERKIAWMEVYAGEKATQVYDQDTWLPQETLDAVRDYVVSIKGPLTTPVGGGIRSLNVALRQQLDLYVCQRPVRWFEGVPSPVKKPGDVDMVIFRENSEDIYAGVEWKAGSPEAEKVIKFLTEEMGVKKIRFTENCGIGIKPVSQEGTKRLVRKALQYAVDNDRSSVTLVHKGNIMKFTEGAFKDWGYEVARDEFGAELLDGGPWMQFKNPKTGKNVVVKDVIADAMLQQILLRPAEYDVIATLNLNGDYLSDALAAEVGGIGIAPGANLSDSVAMFEATHGTAPKYAGQDKVNPGSLILSAEMMLRHMGWTEAADLIIKGTNGAIAAKTVTYDFERLMDGATLLSCSEFGDAMIAKM.

Thr106 contributes to the NADP(+) binding site. D-threo-isocitrate-binding residues include Ser115, Asn117, Arg121, Arg131, and Arg155. Ser115 is subject to Phosphoserine. Thr193 bears the Phosphothreonine mark. Mg(2+) is bound at residue Asp309. NADP(+)-binding positions include 341 to 347 (HGTAPKY), Asn354, Tyr393, and Arg397.

Belongs to the isocitrate and isopropylmalate dehydrogenases family. Homodimer. Mg(2+) is required as a cofactor. Mn(2+) serves as cofactor.

It localises to the secreted. The catalysed reaction is D-threo-isocitrate + NADP(+) = 2-oxoglutarate + CO2 + NADPH. In terms of biological role, catalyzes the oxidative decarboxylation of isocitrate to 2-oxoglutarate and carbon dioxide with the concomitant reduction of NADP(+). This chain is Isocitrate dehydrogenase [NADP] (icd), found in Pseudomonas aeruginosa (strain UCBPP-PA14).